We begin with the raw amino-acid sequence, 125 residues long: MIQALLVAVGGAIGSLLRYYVGQWTLRLMGPAFPWGTLAVNVVGCFVIGVFAELIARRFNASVELRLLLITGFLGGFTTFSAFSLDAISLFERGEAVAGGIYTVASVGLSMAAVMAGLAVMRALA.

The next 4 membrane-spanning stretches (helical) occupy residues 1–21, 32–52, 68–88, and 101–121; these read MIQA…RYYV, AFPW…GVFA, LLIT…LDAI, and IYTV…LAVM. Na(+)-binding residues include G75 and T78.

Belongs to the fluoride channel Fluc/FEX (TC 1.A.43) family.

It is found in the cell inner membrane. It catalyses the reaction fluoride(in) = fluoride(out). Its activity is regulated as follows. Na(+) is not transported, but it plays an essential structural role and its presence is essential for fluoride channel function. Fluoride-specific ion channel. Important for reducing fluoride concentration in the cell, thus reducing its toxicity. The polypeptide is Fluoride-specific ion channel FluC (Rhizobium leguminosarum bv. trifolii (strain WSM2304)).